The chain runs to 269 residues: 2-keto-4-pentenoate hydratase (269 aa).

This sequence belongs to the hydratase/decarboxylase family. MhpD subfamily. A divalent metal cation serves as cofactor.

The catalysed reaction is (S)-4-hydroxy-2-oxopentanoate = (2Z)-2-hydroxypenta-2,4-dienoate + H2O. It functions in the pathway aromatic compound metabolism; 3-phenylpropanoate degradation. In terms of biological role, catalyzes the conversion of 2-hydroxypentadienoic acid (enolic form of 2-oxopent-4-enoate) to 4-hydroxy-2-ketopentanoic acid. The polypeptide is 2-keto-4-pentenoate hydratase (Paraburkholderia xenovorans (strain LB400)).